The sequence spans 1495 residues: Collagen alpha-1(XVII) chain (1495 aa).

Basic and acidic residues predominate over residues 1-17 (MDSVTKKTRQDGSEVTE). A disordered region spans residues 1-138 (MDSVTKKTRQ…VRLQSASPSG (138 aa)). Residues 1-435 (MDSVTKKTRQ…CGSCCSWWKW (435 aa)) are Cytoplasmic-facing. The nonhelical region (NC16) stretch occupies residues 1-535 (MDSVTKKTRQ…IERGYFRGER (535 aa)). Residues 19–32 (QGGSSSGLKTSSHT) are compositionally biased toward polar residues. Positions 51–63 (SSGSGRLNSSSSG) are enriched in low complexity. Composition is skewed to polar residues over residues 64–80 (YRQT…SPGS) and 95–104 (EGSSSANSSP). Residues 436–456 (LLGLLLAWLLLLGLLFGLIAL) traverse the membrane as a helical; Signal-anchor for type II membrane protein segment. Residues 457–1495 (AEEVRKLKSR…GRRRRRSVGV (1039 aa)) lie on the Extracellular side of the membrane. 7 disordered regions span residues 532 to 824 (RGER…EKGS), 847 to 999 (DLQG…SSSQ), 1160 to 1185 (EFSG…SSGI), 1201 to 1226 (SISG…TGLL), 1251 to 1278 (RSYI…LVAG), 1295 to 1336 (GGSI…GSYG), and 1396 to 1416 (MSYT…PGIS). The triple-helical region stretch occupies residues 536–1482 (GEPGMKGDMG…KGEKGEKGEQ (947 aa)). Composition is skewed to low complexity over residues 702–711 (PGAKGPAGQA) and 761–773 (RPGA…APGK). The span at 786–807 (PGPPGPPGPIGPTGPPGVPGPV) shows a compositional bias: pro residues. Over residues 809–818 (PAGLPGQQGP) the composition is skewed to low complexity. Pro residues-rich tracts occupy residues 871 to 886 (PRGP…PPGR), 901 to 910 (PPGPPGPPGP), 946 to 955 (PPGPPGPPGP), 981 to 993 (PPGP…PPGP), 1167 to 1179 (PPGP…PPGI), 1208 to 1218 (PPGPPGPPGPP), and 1257 to 1269 (PPGP…PPGP). Positions 1296–1308 (GSIGAEGSHGGSL) are enriched in gly residues. Residues 1309–1336 (GASSSYGSSMSSSMSSYSASMGSDGSYG) show a composition bias toward low complexity. The span at 1403-1413 (PPGPPGPPGPP) shows a compositional bias: pro residues. An N-linked (GlcNAc...) asparagine glycan is attached at N1424. The tract at residues 1435 to 1495 (THGTVRGPPG…GRRRRRSVGV (61 aa)) is disordered. A compositionally biased stretch (basic and acidic residues) spans 1472-1481 (PKGEKGEKGE). A nonhelical region (NC1) region spans residues 1483-1495 (MYSGRRRRRSVGV). A compositionally biased stretch (basic residues) spans 1486–1495 (GRRRRRSVGV).

Homotrimers of alpha 1(XVII)chains. The intracellular/endo domain is disulfide-linked. Post-translationally, prolines at the third position of the tripeptide repeating unit (G-X-Y) are hydroxylated in some or all of the chains. In terms of processing, the ectodomain is shedded from the surface of keratinocytes resulting in a 120-kDa soluble form, also named as 120 kDa linear IgA disease antigen homolog. The shedding is mediated by membrane-bound metalloproteases. Cornea specific.

It is found in the cell junction. It localises to the hemidesmosome. The protein resides in the membrane. The protein localises to the secreted. Its subcellular location is the extracellular space. It is found in the extracellular matrix. It localises to the basement membrane. In terms of biological role, may play a role in the integrity of hemidesmosome and the attachment of basal keratinocytes to the underlying basement membrane. Functionally, the 120 kDa linear IgA disease antigen homolog is an anchoring filament component involved in dermal-epidermal cohesion. This chain is Collagen alpha-1(XVII) chain (COL17A1), found in Gallus gallus (Chicken).